Reading from the N-terminus, the 174-residue chain is RNA pyrophosphohydrolase (174 aa).

The Nudix hydrolase domain maps to 6–145 (GYRPNVGMII…KRRVYWQALQ (140 aa)). The short motif at 38–59 (GGIDYAETPEQAMFRELEEEVG) is the Nudix box element.

Belongs to the Nudix hydrolase family. RppH subfamily. A divalent metal cation serves as cofactor.

In terms of biological role, accelerates the degradation of transcripts by removing pyrophosphate from the 5'-end of triphosphorylated RNA, leading to a more labile monophosphorylated state that can stimulate subsequent ribonuclease cleavage. The chain is RNA pyrophosphohydrolase from Acidithiobacillus ferrooxidans (strain ATCC 53993 / BNL-5-31) (Leptospirillum ferrooxidans (ATCC 53993)).